A 315-amino-acid chain; its full sequence is Indoleacetate decarboxylase activating enzyme (315 aa).

The Radical SAM core domain occupies 21 to 311; that stretch reads HDGPGIRTNV…ADIIEAHGVK (291 aa). 11 residues coordinate [4Fe-4S] cluster: Cys35, Cys39, Cys42, Cys61, Cys64, Cys67, Cys71, Cys98, Cys101, Cys106, and Cys110. 4Fe-4S ferredoxin-type domains are found at residues 52–81 and 89–120; these read PQLLYTKMKCIGCMCCARACPYGAVSAITD and GYVHHDRSKCDKCTTHECLSACFQEALSIAGE. Residues Gly149, 198–200, and His271 each bind S-adenosyl-L-methionine; that span reads DCK.

The protein belongs to the organic radical-activating enzymes family. [4Fe-4S] cluster is required as a cofactor.

The enzyme catalyses glycyl-[protein] + reduced [flavodoxin] + S-adenosyl-L-methionine = glycin-2-yl radical-[protein] + semiquinone [flavodoxin] + 5'-deoxyadenosine + L-methionine + H(+). Its function is as follows. Catalyzes activation of the indoleacetate decarboxylase OsIAD under anaerobic conditions by generation of an organic free radical on a glycine residue, via a homolytic cleavage of S-adenosyl-L-methionine (SAM). The sequence is that of Indoleacetate decarboxylase activating enzyme from Tractidigestivibacter scatoligenes (Olsenella scatoligenes).